The primary structure comprises 192 residues: Vascular endothelial growth factor A (192 aa).

Residues 1–26 form the signal peptide; the sequence is MNFLLTWIHWGLAALLYFHNAKVLQA. Disulfide bonds link cysteine 52-cysteine 94, cysteine 83-cysteine 128, and cysteine 87-cysteine 130. N-linked (GlcNAc...) asparagine glycosylation occurs at asparagine 101.

Belongs to the PDGF/VEGF growth factor family. In terms of assembly, homodimer; disulfide-linked. Also found as heterodimer with PGF. Interacts with FLT1/VEGFR1 and KDR/VEGFR2 receptors, heparan sulfate and heparin. Expressed by the venom gland, and probably other tissues.

Its subcellular location is the secreted. In terms of biological role, growth factor active in angiogenesis, vasculogenesis and endothelial cell growth. Induces endothelial cell proliferation, promotes cell migration, inhibits apoptosis and induces permeabilization of blood vessels. The sequence is that of Vascular endothelial growth factor A from Agkistrodon piscivorus piscivorus (Eastern cottonmouth).